The chain runs to 518 residues: MIPDVSQALAWLEKHPQALKGIQRGLERETLRVNADGTLATTGHPEALGSALTHKWITTDFAEALLEFITPVDGDIEHMLTFMRDLHRYTARNMGDERMWPLSMPCYIAEGQDIELAQYGTSNTGRFKTLYREGLKNRYGALMQTISGVHYNFSLPMAFWQAKCGDISGTDAKEKISAGYFRVIRNYYRFGWVIPYLFGASPAIFSSFLQGKPTSLPFEKTECGMYYLPYATSLRLSDLGYTNKSQSNLGITFNDLYEYVAGLKQAIKTPSEEYAKIGIEKDGKRLQINSNVLQIENELYAPIRPKRVTRSGESPSDALLRGGIEYIEVRSLDINPFSPIGVDEQQVRFLDLFMVWCALADAPEMSSSELACTRVNWNRVILEGRKPGLTLGIGCETAQFPLPQVGKDLFRDLKRVAQTLDSINGGEAYQKVCDELVACFDNPDLTFSARILRSMIDTGIGGTGKAFAEAYRNLLREEPLEILREEDFVAEREASERRQQEMETADTEPFAVWLEKHA.

This sequence belongs to the glutamate--cysteine ligase type 1 family. Type 1 subfamily.

It carries out the reaction L-cysteine + L-glutamate + ATP = gamma-L-glutamyl-L-cysteine + ADP + phosphate + H(+). It participates in sulfur metabolism; glutathione biosynthesis; glutathione from L-cysteine and L-glutamate: step 1/2. The protein is Glutamate--cysteine ligase of Shigella boydii serotype 18 (strain CDC 3083-94 / BS512).